A 582-amino-acid chain; its full sequence is Phosphoglucomutase, cytoplasmic (582 aa).

2 residues coordinate alpha-D-glucose 1,6-bisphosphate: Arg25 and Ser124. Ser124 (phosphoserine intermediate) is an active-site residue. Mg(2+) is bound by residues Ser124, Asp299, Asp301, and Asp303. Position 124 is a phosphoserine (Ser124). Residues Asp303, Arg304, Thr367, Glu386, Ser388, and Lys399 each contribute to the alpha-D-glucose 1,6-bisphosphate site.

Belongs to the phosphohexose mutase family. As to quaternary structure, monomer. Mg(2+) serves as cofactor.

The protein localises to the cytoplasm. It catalyses the reaction alpha-D-glucose 1-phosphate = alpha-D-glucose 6-phosphate. It carries out the reaction O-phospho-L-seryl-[protein] + alpha-D-glucose 1-phosphate = alpha-D-glucose 1,6-bisphosphate + L-seryl-[protein]. The catalysed reaction is alpha-D-glucose 1,6-bisphosphate + L-seryl-[protein] = O-phospho-L-seryl-[protein] + alpha-D-glucose 6-phosphate. Functionally, catalyzes the reversible isomerization of alpha-D-glucose 1-phosphate to alpha-D-glucose 6-phosphate. The mechanism proceeds via the intermediate compound alpha-D-glucose 1,6-bisphosphate. This enzyme participates in both the breakdown and synthesis of glucose. The chain is Phosphoglucomutase, cytoplasmic (PGM1) from Populus tremula (European aspen).